The following is a 1285-amino-acid chain: Replicase polyprotein 1TF (1285 aa).

A C4-type; atypical zinc finger spans residues 8–28 (CMCTPAARVFWNAGQVFCTRC). The 112-residue stretch at 69 to 180 (ECTPSGCCWL…QPFCPFEEAH (112 aa)) folds into the Peptidase C31 domain. Residues 69–182 (ECTPSGCCWL…FCPFEEAHSS (114 aa)) form a PCP1-alpha region. Active-site for Nsp1-alpha papain-like cysteine proteinase activity residues include Cys-76 and His-146. Positions 269-384 (PDVFDGKCWL…IFRFGAHKWY (116 aa)) are PCP1-beta. Positions 269-385 (PDVFDGKCWL…FRFGAHKWYG (117 aa)) constitute a Peptidase C32 domain. Catalysis depends on for Nsp1-beta papain-like cysteine proteinase activity residues Cys-276 and His-345. Disordered regions lie at residues 752–797 (PSDP…DAGA) and 1050–1088 (KPVG…SRVS). A compositionally biased stretch (polar residues) spans 775-790 (APASTTTLVREQTPDN). 4 helical membrane-spanning segments follow: residues 1136–1156 (LWLQ…CSVV), 1170–1190 (FLVL…LLLY), 1211–1231 (VMLS…AALW), and 1250–1270 (VISG…FLLF).

It is found in the host nucleus. Its subcellular location is the host cytoplasm. The protein localises to the host membrane. Functionally, inhibits host IFN-beta production. Plays a role in the degradation of the host transcriptional activator CREBBP protein. The degradation of host CREBBP which is a key component of the IFN enhanceosome is likely responsible for the inhibition of interferon mediated by Nsp1-alpha. Also participates in the inhibition of host NF-kappa-B activation. In terms of biological role, plays a role in the inhibition of the interferon-activated JAK/STAT signal transduction by mediating the ubiquitination and subsequent proteasomal degradation of host KPNA1. Plays a role in viral replication. This Porcine reproductive and respiratory syndrome virus (strain Lelystad) (PRRSV) protein is Replicase polyprotein 1TF.